The following is a 294-amino-acid chain: 4-hydroxy-tetrahydrodipicolinate synthase (294 aa).

Threonine 47 contributes to the pyruvate binding site. Tyrosine 135 serves as the catalytic Proton donor/acceptor. The active-site Schiff-base intermediate with substrate is the lysine 163. A pyruvate-binding site is contributed by threonine 205.

This sequence belongs to the DapA family. Homotetramer; dimer of dimers.

It localises to the cytoplasm. The catalysed reaction is L-aspartate 4-semialdehyde + pyruvate = (2S,4S)-4-hydroxy-2,3,4,5-tetrahydrodipicolinate + H2O + H(+). Its pathway is amino-acid biosynthesis; L-lysine biosynthesis via DAP pathway; (S)-tetrahydrodipicolinate from L-aspartate: step 3/4. Functionally, catalyzes the condensation of (S)-aspartate-beta-semialdehyde [(S)-ASA] and pyruvate to 4-hydroxy-tetrahydrodipicolinate (HTPA). In Rickettsia rickettsii, this protein is 4-hydroxy-tetrahydrodipicolinate synthase.